The primary structure comprises 516 residues: uncharacterized protein (516 aa).

To H.influenzae HI_0521.

This is an uncharacterized protein from Escherichia coli (strain K12).